The primary structure comprises 384 residues: Epoxyqueuosine reductase (384 aa).

The active-site Proton donor is the D144. Residues 186–218 (LPLPVDQPVEEGCGKCVACMTICPTGAIVEPYT) form the 4Fe-4S ferredoxin-type domain. C198, C201, C204, C208, C224, C251, C254, and C258 together coordinate [4Fe-4S] cluster.

It belongs to the QueG family. As to quaternary structure, monomer. Cob(II)alamin is required as a cofactor. Requires [4Fe-4S] cluster as cofactor.

It localises to the cytoplasm. The enzyme catalyses epoxyqueuosine(34) in tRNA + AH2 = queuosine(34) in tRNA + A + H2O. It functions in the pathway tRNA modification; tRNA-queuosine biosynthesis. In terms of biological role, catalyzes the conversion of epoxyqueuosine (oQ) to queuosine (Q), which is a hypermodified base found in the wobble positions of tRNA(Asp), tRNA(Asn), tRNA(His) and tRNA(Tyr). The protein is Epoxyqueuosine reductase of Salmonella typhimurium (strain LT2 / SGSC1412 / ATCC 700720).